Consider the following 476-residue polypeptide: Adenosylhomocysteinase (476 aa).

Substrate is bound by residues Thr-62, Asp-141, and Glu-201. 202-204 (TTT) contacts NAD(+). Residues Lys-231 and Asp-235 each contribute to the substrate site. NAD(+) is bound by residues Asn-236, 265–270 (GYGDVG), Glu-288, Asn-323, 344–346 (IGH), and Asn-389.

Belongs to the adenosylhomocysteinase family. NAD(+) is required as a cofactor.

Its subcellular location is the cytoplasm. The catalysed reaction is S-adenosyl-L-homocysteine + H2O = L-homocysteine + adenosine. It functions in the pathway amino-acid biosynthesis; L-homocysteine biosynthesis; L-homocysteine from S-adenosyl-L-homocysteine: step 1/1. May play a key role in the regulation of the intracellular concentration of adenosylhomocysteine. This Delftia acidovorans (strain DSM 14801 / SPH-1) protein is Adenosylhomocysteinase.